Reading from the N-terminus, the 117-residue chain is uncharacterized protein (117 aa).

A signal peptide spans 1 to 22 (MHVKYLAGIVGAALLMAGCSSS).

This is an uncharacterized protein from Escherichia coli O6:H1 (strain CFT073 / ATCC 700928 / UPEC).